The chain runs to 700 residues: Elongation factor G (700 aa).

In terms of domain architecture, tr-type G spans 10 to 286 (NKVRNIGIMA…AVIDYLPNPL (277 aa)). GTP is bound by residues 19 to 26 (AHIDAGKT), 83 to 87 (DTPGH), and 137 to 140 (NKMD).

This sequence belongs to the TRAFAC class translation factor GTPase superfamily. Classic translation factor GTPase family. EF-G/EF-2 subfamily.

It localises to the cytoplasm. In terms of biological role, catalyzes the GTP-dependent ribosomal translocation step during translation elongation. During this step, the ribosome changes from the pre-translocational (PRE) to the post-translocational (POST) state as the newly formed A-site-bound peptidyl-tRNA and P-site-bound deacylated tRNA move to the P and E sites, respectively. Catalyzes the coordinated movement of the two tRNA molecules, the mRNA and conformational changes in the ribosome. The sequence is that of Elongation factor G from Rhodococcus opacus (strain B4).